Reading from the N-terminus, the 245-residue chain is Transmembrane protein 69 (245 aa).

The next 5 helical transmembrane spans lie at 97–117 (ALYI…LMVI), 122–142 (IPVL…FLGG), 159–179 (YINL…ILFS), 185–205 (AIVT…FLLP), and 216–236 (IVST…ENIY).

The protein localises to the membrane. The protein is Transmembrane protein 69 (Tmem69) of Mus musculus (Mouse).